Reading from the N-terminus, the 900-residue chain is DNA polymerase nu (900 aa).

The segment covering 60–75 (LEDRKTQSPEKKDLKS) has biased composition (basic and acidic residues). 2 disordered regions span residues 60–90 (LEDRKTQSPEKKDLKSLRSQTSRGSAKLSPQ) and 863–900 (GPPPGPCRTESPSNSLAAPGSPASTQPPPLHFSPSFCL). Polar residues predominate over residues 76-90 (LRSQTSRGSAKLSPQ).

Belongs to the DNA polymerase type-A family. Interacts with FANCD2, FANCI, PCNA, RAD51 and HELQ. Highly expressed in testis and heart. Weakly expressed in skeletal muscle.

The protein resides in the nucleus. The catalysed reaction is DNA(n) + a 2'-deoxyribonucleoside 5'-triphosphate = DNA(n+1) + diphosphate. Its activity is regulated as follows. Inhibited by ddTTP. DNA polymerase with very low fidelity that catalyzes considerable misincorporation by inserting dTTP opposite a G template, and dGTP opposite a T template. Is the least accurate of the DNA polymerase A family (i.e. POLG, POLN and POLQ). Can perform accurate translesion DNA synthesis (TLS) past a 5S-thymine glycol. Can perform efficient strand displacement past a nick or a gap and gives rise to an amount of product similar to that on non-damaged template. Has no exonuclease activity. Error-prone DNA polymerase that preferentially misincorporates dT regardless of template sequence. May play a role in TLS during interstrand cross-link (ICL) repair. May be involved in TLS when genomic replication is blocked by extremely large major groove DNA lesions. May function in the bypass of some DNA-protein and DNA-DNA cross-links. May have a role in cellular tolerance to DNA cross-linking agents. Involved in the repair of DNA cross-links and double-strand break (DSB) resistance. Participates in FANCD2-mediated repair. Forms a complex with HELQ helicase that participates in homologous recombination (HR) repair and is essential for cellular protection against DNA cross-links. This Homo sapiens (Human) protein is DNA polymerase nu (POLN).